The sequence spans 633 residues: Phospholipid--sterol O-acyltransferase (633 aa).

Residues 1 to 6 (MGANSK) are Cytoplasmic-facing. A helical; Signal-anchor for type II membrane protein transmembrane segment spans residues 7–29 (SVTASFTVIAVFFLICGGRTAVE). Over 30–633 (DETEFHGDYS…TSANMLLQYI (604 aa)) the chain is Lumenal. Residue Ser195 is the Acyl-ester intermediate of the active site. Catalysis depends on charge relay system residues Asp461 and His505.

Belongs to the AB hydrolase superfamily. Lipase family.

It is found in the microsome membrane. Involved in lipid catabolism. Essential for sterol esters biosynthesis in leaves and seeds, but not in flowers. Plays a role in controlling the free sterol content of leaves. Catalyzes the transacylation of acyl groups from phospholipids to a variety of different sterols. Prefers phosphatidylethanolamine over phosphatidylcholine as an acyl donor. Not active toward neutral lipids. Highly specific for position sn-2, which in plant lipids is essentially devoid of saturated acyl groups. Broad sterol specificity (cholesterol &gt; campesterol &gt; sitosterol &gt; stigmasterol), but no activity with lupeol or beta-amyrin. In Arabidopsis thaliana (Mouse-ear cress), this protein is Phospholipid--sterol O-acyltransferase (PSAT).